Here is a 126-residue protein sequence, read N- to C-terminus: Holo-[acyl-carrier-protein] synthase (126 aa).

Positions 9 and 58 each coordinate Mg(2+).

Belongs to the P-Pant transferase superfamily. AcpS family. Mg(2+) serves as cofactor.

The protein resides in the cytoplasm. The enzyme catalyses apo-[ACP] + CoA = holo-[ACP] + adenosine 3',5'-bisphosphate + H(+). Transfers the 4'-phosphopantetheine moiety from coenzyme A to a Ser of acyl-carrier-protein. This Escherichia coli O127:H6 (strain E2348/69 / EPEC) protein is Holo-[acyl-carrier-protein] synthase.